Reading from the N-terminus, the 155-residue chain is uncharacterized protein (155 aa).

In terms of domain architecture, N-acetyltransferase spans 6 to 155 (TCVRNARLAD…CDEIAMVKTL (150 aa)).

The protein belongs to the acetyltransferase family.

This is an uncharacterized protein from Chlorobaculum tepidum (strain ATCC 49652 / DSM 12025 / NBRC 103806 / TLS) (Chlorobium tepidum).